The sequence spans 146 residues: Ribonuclease H (146 aa).

Residues 1–143 (MKEIIIYTDG…CDQLARNAIK (143 aa)) form the RNase H type-1 domain. Residues Asp9, Glu47, Asp70, and Asp135 each coordinate Mg(2+).

It belongs to the RNase H family. Monomer. Mg(2+) serves as cofactor.

Its subcellular location is the cytoplasm. It carries out the reaction Endonucleolytic cleavage to 5'-phosphomonoester.. Functionally, endonuclease that specifically degrades the RNA of RNA-DNA hybrids. The polypeptide is Ribonuclease H (Syntrophomonas wolfei subsp. wolfei (strain DSM 2245B / Goettingen)).